The primary structure comprises 202 residues: Na(+)-translocating NADH-quinone reductase subunit E (202 aa).

The next 6 helical transmembrane spans lie at 11–31 (SVFI…FLAV), 35–55 (VTTA…SVPA), 79–99 (LSFL…QILE), 114–134 (GIFL…AFMV), 144–164 (LVFG…LAAV), and 180–200 (LGIT…FSGV).

This sequence belongs to the NqrDE/RnfAE family. Composed of six subunits; NqrA, NqrB, NqrC, NqrD, NqrE and NqrF.

It is found in the cell inner membrane. The catalysed reaction is a ubiquinone + n Na(+)(in) + NADH + H(+) = a ubiquinol + n Na(+)(out) + NAD(+). NQR complex catalyzes the reduction of ubiquinone-1 to ubiquinol by two successive reactions, coupled with the transport of Na(+) ions from the cytoplasm to the periplasm. NqrA to NqrE are probably involved in the second step, the conversion of ubisemiquinone to ubiquinol. The protein is Na(+)-translocating NADH-quinone reductase subunit E of Shewanella denitrificans (strain OS217 / ATCC BAA-1090 / DSM 15013).